We begin with the raw amino-acid sequence, 449 residues long: Tubulin beta-7 chain (449 aa).

GTP is bound by residues Q11, E69, S138, G142, T143, G144, N204, and N226. E69 is a binding site for Mg(2+). The interval 422-449 (YQQYQDATADEEGEYEEEEAEYEQEETY) is disordered. The span at 429-449 (TADEEGEYEEEEAEYEQEETY) shows a compositional bias: acidic residues.

This sequence belongs to the tubulin family. In terms of assembly, dimer of alpha and beta chains. A typical microtubule is a hollow water-filled tube with an outer diameter of 25 nm and an inner diameter of 15 nM. Alpha-beta heterodimers associate head-to-tail to form protofilaments running lengthwise along the microtubule wall with the beta-tubulin subunit facing the microtubule plus end conferring a structural polarity. Microtubules usually have 13 protofilaments but different protofilament numbers can be found in some organisms and specialized cells. Requires Mg(2+) as cofactor.

Its subcellular location is the cytoplasm. The protein localises to the cytoskeleton. Tubulin is the major constituent of microtubules, a cylinder consisting of laterally associated linear protofilaments composed of alpha- and beta-tubulin heterodimers. Microtubules grow by the addition of GTP-tubulin dimers to the microtubule end, where a stabilizing cap forms. Below the cap, tubulin dimers are in GDP-bound state, owing to GTPase activity of alpha-tubulin. This chain is Tubulin beta-7 chain (TUBB7), found in Arabidopsis thaliana (Mouse-ear cress).